We begin with the raw amino-acid sequence, 694 residues long: Elongation factor G 2 (694 aa).

Positions 6-282 (SKLRNIGISA…GVVDYLPDPT (277 aa)) constitute a tr-type G domain. Residues 15 to 22 (AHIDSGKT), 82 to 86 (DTPGH), and 136 to 139 (NKCD) each bind GTP.

Belongs to the TRAFAC class translation factor GTPase superfamily. Classic translation factor GTPase family. EF-G/EF-2 subfamily.

The protein resides in the cytoplasm. Its function is as follows. Catalyzes the GTP-dependent ribosomal translocation step during translation elongation. During this step, the ribosome changes from the pre-translocational (PRE) to the post-translocational (POST) state as the newly formed A-site-bound peptidyl-tRNA and P-site-bound deacylated tRNA move to the P and E sites, respectively. Catalyzes the coordinated movement of the two tRNA molecules, the mRNA and conformational changes in the ribosome. The protein is Elongation factor G 2 of Anaeromyxobacter dehalogenans (strain 2CP-C).